The following is a 167-amino-acid chain: Schlafen-like protein (167 aa).

This sequence belongs to the Schlafen family. Subgroup poxviridae B3 subfamily.

The chain is Schlafen-like protein from Bos taurus (Bovine).